The primary structure comprises 304 residues: Non-specific ribonucleoside hydrolase RihC (304 aa).

His-233 is a catalytic residue.

The protein belongs to the IUNH family. RihC subfamily.

Hydrolyzes both purine and pyrimidine ribonucleosides with a broad-substrate specificity. This chain is Non-specific ribonucleoside hydrolase RihC, found in Escherichia coli O45:K1 (strain S88 / ExPEC).